Reading from the N-terminus, the 490-residue chain is Bifunctional protein HldE (490 aa).

Positions 1–330 (MFSFDALLQA…RRILPHASLA (330 aa)) are ribokinase. 205-208 (NRKE) contributes to the ATP binding site. Aspartate 275 is an active-site residue. The segment at 358 to 490 (FTNGCFDILH…LVARAREGQS (133 aa)) is cytidylyltransferase.

It in the N-terminal section; belongs to the carbohydrate kinase PfkB family. The protein in the C-terminal section; belongs to the cytidylyltransferase family. In terms of assembly, homodimer.

It catalyses the reaction D-glycero-beta-D-manno-heptose 7-phosphate + ATP = D-glycero-beta-D-manno-heptose 1,7-bisphosphate + ADP + H(+). It carries out the reaction D-glycero-beta-D-manno-heptose 1-phosphate + ATP + H(+) = ADP-D-glycero-beta-D-manno-heptose + diphosphate. It functions in the pathway nucleotide-sugar biosynthesis; ADP-L-glycero-beta-D-manno-heptose biosynthesis; ADP-L-glycero-beta-D-manno-heptose from D-glycero-beta-D-manno-heptose 7-phosphate: step 1/4. Its pathway is nucleotide-sugar biosynthesis; ADP-L-glycero-beta-D-manno-heptose biosynthesis; ADP-L-glycero-beta-D-manno-heptose from D-glycero-beta-D-manno-heptose 7-phosphate: step 3/4. Its function is as follows. Catalyzes the phosphorylation of D-glycero-D-manno-heptose 7-phosphate at the C-1 position to selectively form D-glycero-beta-D-manno-heptose-1,7-bisphosphate. Catalyzes the ADP transfer from ATP to D-glycero-beta-D-manno-heptose 1-phosphate, yielding ADP-D-glycero-beta-D-manno-heptose. In Rhodopseudomonas palustris (strain ATCC BAA-98 / CGA009), this protein is Bifunctional protein HldE.